A 254-amino-acid chain; its full sequence is Alcohol dehydrogenase (254 aa).

Residue 10–33 (FVAGLGGIGLDTSRELVKRDLKNL) coordinates NAD(+). Position 138 (S138) interacts with substrate. The active-site Proton acceptor is the Y151.

This sequence belongs to the short-chain dehydrogenases/reductases (SDR) family. Homodimer.

The catalysed reaction is a primary alcohol + NAD(+) = an aldehyde + NADH + H(+). It catalyses the reaction a secondary alcohol + NAD(+) = a ketone + NADH + H(+). This Drosophila guanche (Fruit fly) protein is Alcohol dehydrogenase (Adh).